The primary structure comprises 78 residues: Protein FAM240B (78 aa).

The protein belongs to the FAM240 family.

The chain is Protein FAM240B from Homo sapiens (Human).